We begin with the raw amino-acid sequence, 161 residues long: Lipoprotein signal peptidase (161 aa).

Transmembrane regions (helical) follow at residues 9 to 29, 63 to 83, and 88 to 108; these read ISLL…WLIT, KMLF…IFYI, and FNLF…GNFI. Residues Asp118 and Asp136 contribute to the active site. The chain crosses the membrane as a helical span at residues 131 to 151; the sequence is IFNIADSSLTIGVIFVIITLI.

The protein belongs to the peptidase A8 family.

The protein resides in the cell membrane. The enzyme catalyses Release of signal peptides from bacterial membrane prolipoproteins. Hydrolyzes -Xaa-Yaa-Zaa-|-(S,diacylglyceryl)Cys-, in which Xaa is hydrophobic (preferably Leu), and Yaa (Ala or Ser) and Zaa (Gly or Ala) have small, neutral side chains.. The protein operates within protein modification; lipoprotein biosynthesis (signal peptide cleavage). This protein specifically catalyzes the removal of signal peptides from prolipoproteins. The chain is Lipoprotein signal peptidase from Staphylococcus epidermidis (strain ATCC 35984 / DSM 28319 / BCRC 17069 / CCUG 31568 / BM 3577 / RP62A).